The chain runs to 150 residues: Arginine repressor (150 aa).

The protein belongs to the ArgR family.

Its subcellular location is the cytoplasm. It functions in the pathway amino-acid biosynthesis; L-arginine biosynthesis [regulation]. Regulates arginine biosynthesis genes. This chain is Arginine repressor, found in Staphylococcus aureus (strain Mu3 / ATCC 700698).